Here is a 360-residue protein sequence, read N- to C-terminus: 3-dehydroquinate synthase (360 aa).

Residues 71–76 (DGEQYK), 105–109 (GVVGD), 129–130 (TT), Lys-142, Lys-151, and 169–172 (TLNT) contribute to the NAD(+) site. Residues Glu-184, His-248, and His-265 each contribute to the Zn(2+) site.

Belongs to the sugar phosphate cyclases superfamily. Dehydroquinate synthase family. The cofactor is Co(2+). Requires Zn(2+) as cofactor. NAD(+) serves as cofactor.

The protein localises to the cytoplasm. It carries out the reaction 7-phospho-2-dehydro-3-deoxy-D-arabino-heptonate = 3-dehydroquinate + phosphate. It participates in metabolic intermediate biosynthesis; chorismate biosynthesis; chorismate from D-erythrose 4-phosphate and phosphoenolpyruvate: step 2/7. Functionally, catalyzes the conversion of 3-deoxy-D-arabino-heptulosonate 7-phosphate (DAHP) to dehydroquinate (DHQ). This Coxiella burnetii (strain CbuK_Q154) (Coxiella burnetii (strain Q154)) protein is 3-dehydroquinate synthase.